The primary structure comprises 433 residues: Enolase (433 aa).

Q167 contributes to the (2R)-2-phosphoglycerate binding site. The active-site Proton donor is E209. 3 residues coordinate Mg(2+): D246, E291, and D318. K343, R372, S373, and K394 together coordinate (2R)-2-phosphoglycerate. The active-site Proton acceptor is K343.

Belongs to the enolase family. Component of the RNA degradosome, a multiprotein complex involved in RNA processing and mRNA degradation. Requires Mg(2+) as cofactor.

The protein resides in the cytoplasm. Its subcellular location is the secreted. It localises to the cell surface. It catalyses the reaction (2R)-2-phosphoglycerate = phosphoenolpyruvate + H2O. It participates in carbohydrate degradation; glycolysis; pyruvate from D-glyceraldehyde 3-phosphate: step 4/5. Catalyzes the reversible conversion of 2-phosphoglycerate (2-PG) into phosphoenolpyruvate (PEP). It is essential for the degradation of carbohydrates via glycolysis. This is Enolase from Shewanella piezotolerans (strain WP3 / JCM 13877).